A 938-amino-acid chain; its full sequence is MPPRLRPTHLEYVVDGVKLRSQLSAAALEHAGDELAQRRAALEILKNALFRGRMIAKERLENGAGGIETARLLSGVTDEVVSALYDFTTVHVFRARNPTEGERLALMAVGGYGRGTLAPFSDIDLLFVRPYKQTAHAESVIEYMLYALWDLGFKVGHASRTIDECLKLSREDFTIRTSILEARRLTGDEKLAGELVERFRKEVVKGTGAEFVAAKLKERDERHARAGASRYMVEPNVKEGKGGLRDLNTLFWIAQYLHPGESLEKVMHLEIFDRREVRTFIQALDFLWAVRCHLHFATGRPEERLSFDLQPEIARRMGYGDRGDAPAVERFMRRYFLFAKDVGSLTRVFAAKLEADRVKTAPKGISRFIPGRAQKRKPLDEPGFHEVGGRLGVDPEIFEADPVNLLKLFRIADQRNLDLHPDAFTAASRASGLITSAVRRDRHAAKVFLDILARGRDPQRTLALMNEAGVLGRFVPEFGRIVAQMQFNMYHSYTVDEHTLRAVGVIADIAAGRLAEDHPLAVQTMPLIADREALFLAMLLHDTGKGGAGGQELAGARAARQACERLGLERSKIELVAWLVEHHLVMSDYAQKRDVSDPRTVADFARIVQSPERLRLLLVLTVADIRAVGPGVWNGWKGQLMRELYTATEAVFRGGRGSDAAAALKRYQENAAYDARVSLAKADPLAEPWADAMEDAYFTAFSEAEVLAHARLAQQAGGGAAAEGRIRSELNAAEVVVAAADRPRLFVDLAEAITAAGANVMGARVFTSRAGQALDVFYVQDASGQPFGSHDPRALARLAETLACAARGEPVAREPRKPQDLGRTAAFAITPAVMLDNEASETSTVVEASGRDRPGLLAALARTISDAGLSILSAHIDGYGERAVDAFYVVDADGRKLTDARKRNALKSALLAALTKAEAETAQARRTNLQRARASVAR.

The segment at 1 to 379 (MPPRLRPTHL…PGRAQKRKPL (379 aa)) is uridylyltransferase. Residues 380-733 (DEPGFHEVGG…GRIRSELNAA (354 aa)) form a uridylyl-removing region. Residues 495–617 (VDEHTLRAVG…VQSPERLRLL (123 aa)) form the HD domain. ACT domains follow at residues 734-813 (EVVV…PVAR) and 845-924 (VVEA…TAQA).

It belongs to the GlnD family. Mg(2+) serves as cofactor.

The catalysed reaction is [protein-PII]-L-tyrosine + UTP = [protein-PII]-uridylyl-L-tyrosine + diphosphate. It catalyses the reaction [protein-PII]-uridylyl-L-tyrosine + H2O = [protein-PII]-L-tyrosine + UMP + H(+). With respect to regulation, uridylyltransferase (UTase) activity is inhibited by glutamine, while glutamine activates uridylyl-removing (UR) activity. Its function is as follows. Modifies, by uridylylation and deuridylylation, the PII regulatory proteins (GlnB and homologs), in response to the nitrogen status of the cell that GlnD senses through the glutamine level. Under low glutamine levels, catalyzes the conversion of the PII proteins and UTP to PII-UMP and PPi, while under higher glutamine levels, GlnD hydrolyzes PII-UMP to PII and UMP (deuridylylation). Thus, controls uridylylation state and activity of the PII proteins, and plays an important role in the regulation of nitrogen assimilation and metabolism. The protein is Bifunctional uridylyltransferase/uridylyl-removing enzyme of Phenylobacterium zucineum (strain HLK1).